A 205-amino-acid polypeptide reads, in one-letter code: Holliday junction branch migration complex subunit RuvA (205 aa).

Positions 1–64 (MIGRLRGVLV…EDAQLLYGFI (64 aa)) are domain I. A domain II region spans residues 65–143 (TKQERALFRL…SLMEASAGSE (79 aa)). Residues 144–156 (REFVLQSNYSPTP) form a flexible linker region. Positions 157 to 205 (TVNSAEEDAISALISLGYKPPQASKSVSAAYKEGMDSETLIKAALKSML) are domain III.

Belongs to the RuvA family. As to quaternary structure, homotetramer. Forms an RuvA(8)-RuvB(12)-Holliday junction (HJ) complex. HJ DNA is sandwiched between 2 RuvA tetramers; dsDNA enters through RuvA and exits via RuvB. An RuvB hexamer assembles on each DNA strand where it exits the tetramer. Each RuvB hexamer is contacted by two RuvA subunits (via domain III) on 2 adjacent RuvB subunits; this complex drives branch migration. In the full resolvosome a probable DNA-RuvA(4)-RuvB(12)-RuvC(2) complex forms which resolves the HJ.

It localises to the cytoplasm. Functionally, the RuvA-RuvB-RuvC complex processes Holliday junction (HJ) DNA during genetic recombination and DNA repair, while the RuvA-RuvB complex plays an important role in the rescue of blocked DNA replication forks via replication fork reversal (RFR). RuvA specifically binds to HJ cruciform DNA, conferring on it an open structure. The RuvB hexamer acts as an ATP-dependent pump, pulling dsDNA into and through the RuvAB complex. HJ branch migration allows RuvC to scan DNA until it finds its consensus sequence, where it cleaves and resolves the cruciform DNA. This is Holliday junction branch migration complex subunit RuvA from Shewanella sp. (strain W3-18-1).